Consider the following 243-residue polypeptide: Small ribosomal subunit protein uS3 (243 aa).

Alanine 2 is subject to N-acetylalanine. 2 positions are modified to phosphoserine: serine 6 and serine 35. Residues 21–92 (LNEFLTRELA…SVELYAEKVA (72 aa)) form the KH type-2 domain. A Phosphothreonine modification is found at threonine 42. An N6-acetyllysine modification is found at lysine 62. Residues arginine 64, arginine 65, and arginine 67 each carry the asymmetric dimethylarginine modification. Threonine 70 carries the post-translational modification Phosphothreonine. Lysine 90 is covalently cross-linked (Glycyl lysine isopeptide (Lys-Gly) (interchain with G-Cter in ubiquitin)). Position 104 is a phosphoserine (serine 104). Lysine 132 carries the post-translational modification N6-succinyllysine. Residues 200 to 243 (PKKPLPDHVSIVEPKDEILPTTPISEQKGGKPEPPAMPQPVPTA) form a disordered region. Lysine 202 participates in a covalent cross-link: Glycyl lysine isopeptide (Lys-Gly) (interchain with G-Cter in ubiquitin). A Phosphoserine modification is found at serine 209. A Glycyl lysine isopeptide (Lys-Gly) (interchain with G-Cter in SUMO2); alternate cross-link involves residue lysine 214. Residue lysine 214 forms a Glycyl lysine isopeptide (Lys-Gly) (interchain with G-Cter in ubiquitin); alternate linkage. A phosphothreonine mark is found at threonine 220 and threonine 221. Serine 224 carries the post-translational modification Phosphoserine. Residue lysine 230 forms a Glycyl lysine isopeptide (Lys-Gly) (interchain with G-Cter in SUMO2) linkage. The segment covering 231–243 (PEPPAMPQPVPTA) has biased composition (pro residues). Position 242 is a phosphothreonine (threonine 242).

This sequence belongs to the universal ribosomal protein uS3 family. In terms of assembly, component of the 40S small ribosomal subunit. Identified in a IGF2BP1-dependent mRNP granule complex containing untranslated mRNAs. Interacts with HNRPD. Interacts with PRMT1; the interaction methylates RPS3. Interacts with SUMO1; the interaction sumoylates RPS3. Interacts with UBC9. Interacts with CDK1; the interaction phosphorylates RPS3. Interacts with PRKCD; the interaction phosphorylates RPS3. Interacts with PKB/AKT; the interaction phosphorylates RPS3. Interacts with E2F1; the interaction occurs in the absence of nerve growth factor and increases transcription of pro-apoptotic proteins BCL2L11/BIM and HRK/Dp5. Interacts with the base excision repair proteins APEX1 and OGG1; interaction with OGG1 increases OGG1 N-glycosylase activity. Interacts with UNG; the interaction increases the uracil excision activity of UNG1. Interacts with HSP90; the interaction prevents the ubiquitination and proteasome-dependent degradation of RPS3 and is suppressed by increased ROS levels. Interacts with TOM70; the interaction promotes translocation of RPS3 to the mitochondrion. Interacts (via N-terminus) with RELA (via N-terminus); the interaction enhances the DNA-binding activity of the NF-kappa-B p65-p50 complex. Interacts with NFKBIA; the interaction is direct and may bridge the interaction between RPS3 and RELA. Interacts with IKKB; the interaction phosphorylates RPS3 and enhances its translocation to the nucleus. Interacts (via KH domain) with MDM2 and TP53. Interacts with TRADD. Interacts with ASCC3. Identified in a HCV IRES-mediated translation complex, at least composed of EIF3C, IGF2BP1, RPS3 and HCV RNA-replicon. Interacts with CRY1. Methylation by PRMT1 is required for import into the nucleolus and for ribosome assembly. In terms of processing, sumoylation by SUMO1 enhances protein stability through increased resistance to proteolysis. Sumoylation occurs at one or more of the three consensus sites, Lys-18, Lys-214 and Lys-230. Post-translationally, phosphorylation at Thr-221 by CDK1 occurs mainly in G2/M phase. Phosphorylation by PRKCD occurs on a non-ribosomal-associated form which results in translocation of RPS3 to the nucleus and enhances its endonuclease activity. Phosphorylated on Ser-209 by IKKB in response to activation of the NF-kappa-B p65-p50 complex which enhances the association of RPS3 with importin-alpha and mediates the nuclear translocation of RPS3. Phosphorylation by MAPK is required for translocation to the nucleus following exposure of cells to DNA damaging agents such as hydrogen peroxide. Phosphorylation by PKB/AKT mediates RPS3 nuclear translocation, enhances RPS3 endonuclease activity and suppresses RPS3-induced neuronal apoptosis. Ubiquitinated; ubiquitination is prevented by interaction with HSP90 which stabilizes the protein. Monoubiquitinated at Lys-214 by RNF10 and ZNF598 when a ribosome has stalled during translation of poly(A) sequences, leading to preclude synthesis of a long poly-lysine tail and initiate the ribosome quality control (RQC) pathway to degrade the potentially detrimental aberrant nascent polypeptide. Deubiquitinated at Lys-214 by USP10, preventing degradation by the proteasome and promoting 40S ribosome subunit recycling following ribosome dissociation. In terms of processing, ufmylated by UFL1.

Its subcellular location is the cytoplasm. It localises to the nucleus. It is found in the nucleolus. The protein resides in the mitochondrion inner membrane. The protein localises to the cytoskeleton. Its subcellular location is the spindle. It carries out the reaction 2'-deoxyribonucleotide-(2'-deoxyribose 5'-phosphate)-2'-deoxyribonucleotide-DNA = a 3'-end 2'-deoxyribonucleotide-(2,3-dehydro-2,3-deoxyribose 5'-phosphate)-DNA + a 5'-end 5'-phospho-2'-deoxyribonucleoside-DNA + H(+). Its activity is regulated as follows. Endonuclease activity is inhibited by MgCl2 on apurinic/apyrimidinic DNA but not on UV-irradiated DNA. Component of the small ribosomal subunit. The ribosome is a large ribonucleoprotein complex responsible for the synthesis of proteins in the cell. Has endonuclease activity and plays a role in repair of damaged DNA. Cleaves phosphodiester bonds of DNAs containing altered bases with broad specificity and cleaves supercoiled DNA more efficiently than relaxed DNA. Displays high binding affinity for 7,8-dihydro-8-oxoguanine (8-oxoG), a common DNA lesion caused by reactive oxygen species (ROS). Has also been shown to bind with similar affinity to intact and damaged DNA. Stimulates the N-glycosylase activity of the base excision protein OGG1. Enhances the uracil excision activity of UNG1. Also stimulates the cleavage of the phosphodiester backbone by APEX1. When located in the mitochondrion, reduces cellular ROS levels and mitochondrial DNA damage. Has also been shown to negatively regulate DNA repair in cells exposed to hydrogen peroxide. Plays a role in regulating transcription as part of the NF-kappa-B p65-p50 complex where it binds to the RELA/p65 subunit, enhances binding of the complex to DNA and promotes transcription of target genes. Represses its own translation by binding to its cognate mRNA. Binds to and protects TP53/p53 from MDM2-mediated ubiquitination. Involved in spindle formation and chromosome movement during mitosis by regulating microtubule polymerization. Involved in induction of apoptosis through its role in activation of CASP8. Induces neuronal apoptosis by interacting with the E2F1 transcription factor and acting synergistically with it to up-regulate pro-apoptotic proteins BCL2L11/BIM and HRK/Dp5. Interacts with TRADD following exposure to UV radiation and induces apoptosis by caspase-dependent JNK activation. In Oryctolagus cuniculus (Rabbit), this protein is Small ribosomal subunit protein uS3 (RPS3).